A 40-amino-acid chain; its full sequence is Omega-conotoxin RsXXVIA (40 aa).

Contains 4 disulfide bonds. As to expression, expressed by the venom duct.

The protein localises to the secreted. In terms of biological role, omega-conotoxins act at presynaptic membranes, they bind and block voltage-gated calcium channels (Cav). This toxin inhibits rat Cav2.2/CACNA1B calcium channels in a dose-dependent manner (EC(50)=2.8 uM), whose effect is partially reversed after washing. In vivo, when injected into mice, it shows both an analgesic effect in acute thermal pain at 30 and 45 minutes post-injection and an anti-nociceptive effect in a formalin chronic pain test. This is Omega-conotoxin RsXXVIA from Conus regularis (Regular cone).